Consider the following 143-residue polypeptide: Transcriptional regulator MraZ (143 aa).

SpoVT-AbrB domains are found at residues 5-47 and 76-119; these read EYLH…PLDE and ATEC…SQAL.

The protein belongs to the MraZ family. As to quaternary structure, forms oligomers.

It localises to the cytoplasm. The protein resides in the nucleoid. The sequence is that of Transcriptional regulator MraZ from Desulfitobacterium hafniense (strain Y51).